A 277-amino-acid polypeptide reads, in one-letter code: Large ribosomal subunit protein uL2 (277 aa).

The interval 222–277 is disordered; it reads GSVMNPNDHPHGGGEGKSPVGHPGPLTPWGKPALGLKTRKNKKYSDKFIIKRKNKK.

Belongs to the universal ribosomal protein uL2 family. Part of the 50S ribosomal subunit. Forms a bridge to the 30S subunit in the 70S ribosome.

Functionally, one of the primary rRNA binding proteins. Required for association of the 30S and 50S subunits to form the 70S ribosome, for tRNA binding and peptide bond formation. It has been suggested to have peptidyltransferase activity; this is somewhat controversial. Makes several contacts with the 16S rRNA in the 70S ribosome. The polypeptide is Large ribosomal subunit protein uL2 (Clostridium kluyveri (strain NBRC 12016)).